A 207-amino-acid chain; its full sequence is Probable RNA 2'-phosphotransferase (207 aa).

It belongs to the KptA/TPT1 family.

Functionally, removes the 2'-phosphate from RNA via an intermediate in which the phosphate is ADP-ribosylated by NAD followed by a presumed transesterification to release the RNA and generate ADP-ribose 1''-2''-cyclic phosphate (APPR&gt;P). May function as an ADP-ribosylase. The polypeptide is Probable RNA 2'-phosphotransferase (Methanosarcina mazei (strain ATCC BAA-159 / DSM 3647 / Goe1 / Go1 / JCM 11833 / OCM 88) (Methanosarcina frisia)).